Consider the following 214-residue polypeptide: Charged multivesicular body protein 2b (214 aa).

The stretch at 25-55 (QRQIARDRTALEKQEKQLEMEIKKMAKTGNR) forms a coiled coil. The disordered stretch occupies residues 178 to 199 (MAHAPSAARKTPSAATAKADGI). The MIT-interacting motif motif lies at 202–212 (EDIERQLKALG).

The protein belongs to the SNF7 family. In terms of assembly, probable core component of the endosomal sorting required for transport complex III (ESCRT-III). ESCRT-III components are thought to multimerize to form a flat lattice on the perimeter membrane of the endosome.

It localises to the cytoplasm. The protein localises to the cytosol. Its subcellular location is the late endosome membrane. In terms of biological role, probable core component of the endosomal sorting required for transport complex III (ESCRT-III) which is involved in multivesicular bodies (MVBs) formation and sorting of endosomal cargo proteins into MVBs. MVBs contain intraluminal vesicles (ILVs) that are generated by invagination and scission from the limiting membrane of the endosome and mostly are delivered to lysosomes enabling degradation of membrane proteins, such as stimulated growth factor receptors, lysosomal enzymes and lipids. This chain is Charged multivesicular body protein 2b (chmp2b), found in Danio rerio (Zebrafish).